The primary structure comprises 396 residues: MIISAASDYRAAAQRILPPFLFHYMDGGAYSEYTLRRNVEDLSEVALRQRILKNMSDLSLETTLFNEKLSMPVALGPVGLCGMYARRGEVQAAKAADAHGIPFTLSTVSVCPIEEVAPAIKRPMWFQLYVLRDRGFMRNALERAKAAGCSTLVFTVDMPTPGARYRDAHSGMSGPNAAMRRYLQAVTHPQWAWDVGLNGRPHDLGNISAYLGKPTGLEDYIGWLANNFDPSISWKDLEWIRDFWDGPMVIKGILDPEDARDAVRFGADGIVVSNHGGRQLDGVLSSACALPAIADAVKGDIAILADSGIRNGLDVVRMIALGADTVLLGRAFLYALATAGQAGVANLLNLIEKEMKVAMTLTGAKSISEITQDSLVQVLGKELPAALAPMAKGNAA.

One can recognise an FMN hydroxy acid dehydrogenase domain in the interval 1–380 (MIISAASDYR…TQDSLVQVLG (380 aa)). A substrate-binding site is contributed by Tyr-24. Residues Ser-106 and Gln-127 each contribute to the FMN site. Residue Tyr-129 participates in substrate binding. Thr-155 is a binding site for FMN. Position 164 (Arg-164) interacts with substrate. Lys-251 contacts FMN. His-275 serves as the catalytic Proton acceptor. Arg-278 contacts substrate. An FMN-binding site is contributed by 306–330 (DSGIRNGLDVVRMIALGADTVLLGR).

The protein belongs to the FMN-dependent alpha-hydroxy acid dehydrogenase family. FMN is required as a cofactor.

It is found in the cell inner membrane. It catalyses the reaction (S)-lactate + A = pyruvate + AH2. Its function is as follows. Catalyzes the conversion of L-lactate to pyruvate. Is coupled to the respiratory chain. This chain is L-lactate dehydrogenase, found in Escherichia coli O1:K1 / APEC.